The sequence spans 116 residues: Iron-sulfur cluster insertion protein ErpA (116 aa).

Iron-sulfur cluster-binding residues include Cys-44, Cys-108, and Cys-110.

Belongs to the HesB/IscA family. As to quaternary structure, homodimer. Requires iron-sulfur cluster as cofactor.

Functionally, required for insertion of 4Fe-4S clusters for at least IspG. This chain is Iron-sulfur cluster insertion protein ErpA, found in Shewanella baltica (strain OS223).